We begin with the raw amino-acid sequence, 152 residues long: SsrA-binding protein (152 aa).

This sequence belongs to the SmpB family.

Its subcellular location is the cytoplasm. Its function is as follows. Required for rescue of stalled ribosomes mediated by trans-translation. Binds to transfer-messenger RNA (tmRNA), required for stable association of tmRNA with ribosomes. tmRNA and SmpB together mimic tRNA shape, replacing the anticodon stem-loop with SmpB. tmRNA is encoded by the ssrA gene; the 2 termini fold to resemble tRNA(Ala) and it encodes a 'tag peptide', a short internal open reading frame. During trans-translation Ala-aminoacylated tmRNA acts like a tRNA, entering the A-site of stalled ribosomes, displacing the stalled mRNA. The ribosome then switches to translate the ORF on the tmRNA; the nascent peptide is terminated with the 'tag peptide' encoded by the tmRNA and targeted for degradation. The ribosome is freed to recommence translation, which seems to be the essential function of trans-translation. This chain is SsrA-binding protein, found in Helicobacter pylori (strain J99 / ATCC 700824) (Campylobacter pylori J99).